Reading from the N-terminus, the 153-residue chain is Ribosomal RNA large subunit methyltransferase H (153 aa).

S-adenosyl-L-methionine contacts are provided by residues Leu-70, Gly-102, and 121-126 (LSRMTF).

The protein belongs to the RNA methyltransferase RlmH family. Homodimer.

The protein localises to the cytoplasm. It carries out the reaction pseudouridine(1915) in 23S rRNA + S-adenosyl-L-methionine = N(3)-methylpseudouridine(1915) in 23S rRNA + S-adenosyl-L-homocysteine + H(+). In terms of biological role, specifically methylates the pseudouridine at position 1915 (m3Psi1915) in 23S rRNA. This is Ribosomal RNA large subunit methyltransferase H from Geotalea uraniireducens (strain Rf4) (Geobacter uraniireducens).